The primary structure comprises 79 residues: Putative defensin-like protein 309 (79 aa).

Positions 1–19 are cleaved as a signal peptide; it reads MKILAFFIFVLLIFSCSSS. 3 cysteine pairs are disulfide-bonded: cysteine 31–cysteine 50, cysteine 37–cysteine 55, and cysteine 41–cysteine 57.

It belongs to the DEFL family.

It localises to the secreted. The protein is Putative defensin-like protein 309 of Arabidopsis thaliana (Mouse-ear cress).